A 669-amino-acid chain; its full sequence is Putative heme-binding protein rrnAC3100 (669 aa).

A heme-binding site is contributed by His-181. Disordered stretches follow at residues 260–351 (RVPT…PDVS) and 451–477 (LGGS…ESSQ). In terms of domain architecture, ABM spans 579–667 (GTMGMFYTVK…VLADRPRHVF (89 aa)).

It in the N-terminal section; belongs to the ChdC family.

The polypeptide is Putative heme-binding protein rrnAC3100 (Haloarcula marismortui (strain ATCC 43049 / DSM 3752 / JCM 8966 / VKM B-1809) (Halobacterium marismortui)).